The chain runs to 940 residues: Isoleucine--tRNA ligase (940 aa).

Positions 58–68 (PYANGDIHIGH) match the 'HIGH' region motif. An L-isoleucyl-5'-AMP-binding site is contributed by Glu564. The 'KMSKS' region signature appears at 605 to 609 (KMSKS). Lys608 is a binding site for ATP. The Zn(2+) site is built by Cys903, Cys906, Cys923, and Cys926.

The protein belongs to the class-I aminoacyl-tRNA synthetase family. IleS type 1 subfamily. Monomer. Zn(2+) is required as a cofactor.

Its subcellular location is the cytoplasm. The catalysed reaction is tRNA(Ile) + L-isoleucine + ATP = L-isoleucyl-tRNA(Ile) + AMP + diphosphate. In terms of biological role, catalyzes the attachment of isoleucine to tRNA(Ile). As IleRS can inadvertently accommodate and process structurally similar amino acids such as valine, to avoid such errors it has two additional distinct tRNA(Ile)-dependent editing activities. One activity is designated as 'pretransfer' editing and involves the hydrolysis of activated Val-AMP. The other activity is designated 'posttransfer' editing and involves deacylation of mischarged Val-tRNA(Ile). The polypeptide is Isoleucine--tRNA ligase (Shewanella halifaxensis (strain HAW-EB4)).